Reading from the N-terminus, the 230-residue chain is Fibrillarin-like rRNA/tRNA 2'-O-methyltransferase (230 aa).

Residues 87–88 (TT), 105–106 (EF), 130–131 (DA), and 150–153 (DVAQ) each bind S-adenosyl-L-methionine.

The protein belongs to the methyltransferase superfamily. Fibrillarin family. Interacts with nop5. Component of box C/D small ribonucleoprotein (sRNP) particles that contain rpl7ae, FlpA and nop5, plus a guide RNA.

Functionally, involved in pre-rRNA and tRNA processing. Utilizes the methyl donor S-adenosyl-L-methionine to catalyze the site-specific 2'-hydroxyl methylation of ribose moieties in rRNA and tRNA. Site specificity is provided by a guide RNA that base pairs with the substrate. Methylation occurs at a characteristic distance from the sequence involved in base pairing with the guide RNA. In Methanococcus maripaludis (strain DSM 14266 / JCM 13030 / NBRC 101832 / S2 / LL), this protein is Fibrillarin-like rRNA/tRNA 2'-O-methyltransferase.